The chain runs to 203 residues: uncharacterized protein (203 aa).

Belongs to the mimivirus L332/L333/L334 family.

This is an uncharacterized protein from Acanthamoeba polyphaga mimivirus (APMV).